A 550-amino-acid polypeptide reads, in one-letter code: Membrane-bound alkaline phosphatase (550 aa).

Positions 1–39 (MSTWWLVVVAAAAAAGLVRAEDRYHPERLAAGEASAATR) are cleaved as a signal peptide. A Mg(2+)-binding site is contributed by Asp83. Asp83 is a binding site for Zn(2+). Ser133 serves as the catalytic Phosphoserine intermediate. Positions 196, 198, and 356 each coordinate Mg(2+). Asp361, His365, Asp402, His403, and His479 together coordinate Zn(2+). Residue Ser524 is the site of GPI-anchor amidated serine attachment. Positions 525-550 (AATVPTAALLSLLLAAFITLRHQCFL) are cleaved as a propeptide — removed in mature form.

Belongs to the alkaline phosphatase family. It depends on Mg(2+) as a cofactor. The cofactor is Zn(2+). In terms of tissue distribution, midgut.

The protein localises to the cell membrane. The catalysed reaction is a phosphate monoester + H2O = an alcohol + phosphate. The chain is Membrane-bound alkaline phosphatase (Alp-m) from Bombyx mori (Silk moth).